Here is a 43-residue protein sequence, read N- to C-terminus: Cytochrome b559 subunit beta (43 aa).

A helical membrane pass occupies residues 18-34; that stretch reads WLAVHTLAVPSVFFLGA. Heme is bound at residue H22.

This sequence belongs to the PsbE/PsbF family. In terms of assembly, heterodimer of an alpha subunit and a beta subunit. PSII is composed of 1 copy each of membrane proteins PsbA, PsbB, PsbC, PsbD, PsbE, PsbF, PsbH, PsbI, PsbJ, PsbK, PsbL, PsbM, PsbT, PsbX, PsbY, PsbZ, Psb30/Ycf12, peripheral proteins PsbO, CyanoQ (PsbQ), PsbU, PsbV and a large number of cofactors. It forms dimeric complexes. Heme b serves as cofactor.

It is found in the cellular thylakoid membrane. Its function is as follows. This b-type cytochrome is tightly associated with the reaction center of photosystem II (PSII). PSII is a light-driven water:plastoquinone oxidoreductase that uses light energy to abstract electrons from H(2)O, generating O(2) and a proton gradient subsequently used for ATP formation. It consists of a core antenna complex that captures photons, and an electron transfer chain that converts photonic excitation into a charge separation. In Picosynechococcus sp. (strain ATCC 27264 / PCC 7002 / PR-6) (Agmenellum quadruplicatum), this protein is Cytochrome b559 subunit beta.